Reading from the N-terminus, the 537-residue chain is Glucans biosynthesis protein D 2 (537 aa).

The tat-type signal signal peptide spans 1–28 (MVTRRHLLASASLSATLAALGITPEALA).

This sequence belongs to the OpgD/OpgG family. Predicted to be exported by the Tat system. The position of the signal peptide cleavage has not been experimentally proven.

Its subcellular location is the periplasm. It participates in glycan metabolism; osmoregulated periplasmic glucan (OPG) biosynthesis. Functionally, probably involved in the control of the structural glucose backbone of osmoregulated periplasmic glucans (OPGs). This Ralstonia nicotianae (strain ATCC BAA-1114 / GMI1000) (Ralstonia solanacearum) protein is Glucans biosynthesis protein D 2 (opgD2).